Consider the following 1035-residue polypeptide: Electrogenic sodium bicarbonate cotransporter 1 (1035 aa).

Topologically, residues 1-421 (MSSEKECLEN…FASDFYDALS (421 aa)) are cytoplasmic. Residues 192–217 (SRLFSTPDNGSPTMTHRNLTSTSLND) are compositionally biased toward polar residues. 2 disordered regions span residues 192 to 222 (SRLFSTPDNGSPTMTHRNLTSTSLNDVSDKP) and 348 to 389 (IEPP…GDSE). Over residues 376–389 (APHDDGGGGHGDSE) the composition is skewed to basic and acidic residues. A helical membrane pass occupies residues 422 to 446 (IQSLSAILFIYLGTVTNAITFGGLL). The Extracellular portion of the chain corresponds to 447–456 (GDATENMQGV). A helical membrane pass occupies residues 457–475 (LESFLGTAVSGAVFCLFGG). Residue Gln476 is a topological domain, cytoplasmic. Residues 477–497 (PLTILSSTGPVLVFERLLFNF) traverse the membrane as a discontinuously helical segment. Residues 498-505 (SKDNDFDY) lie on the Extracellular side of the membrane. The chain crosses the membrane as a helical span at residues 506-526 (LEFRLWIGLWSAFQCLILVAT). Topologically, residues 527-540 (DASFLVKYFTRFTE) are cytoplasmic. Residues 541–564 (EGFSSLISFIFIYDAFKKMIKLAD) traverse the membrane as a helical segment. The Extracellular portion of the chain corresponds to 565 to 648 (YYPINSHFKV…GSNCKYVPDI (84 aa)). Residues Asn591, Asn596, Asn609, and Asn617 are each glycosylated (N-linked (GlcNAc...) asparagine). The helical transmembrane segment at 649-666 (TLMSFILFLGTYTCSMAL) threads the bilayer. Over 667 to 681 (KKFKTSRYFPTTARK) the chain is Cytoplasmic. The helical transmembrane segment at 682 to 701 (LISDFAIILSILIFCGLDAL) threads the bilayer. Residues 702–735 (LGVDTPKLIVPSEFKPTSPNRGWFVPPFGGNPWW) are Extracellular-facing. Residues 736–763 (VYLAAAIPALLVTILIFMDQQITGVIVN) traverse the membrane as a helical segment. The Cytoplasmic segment spans residues 764 to 775 (RKEHKLKKGAGY). The chain crosses the membrane as a helical span at residues 776 to 792 (HLDLFWVAILMVVCSFM). Position 793 (Ala793) is a topological domain, extracellular. A discontinuously helical membrane pass occupies residues 794–811 (LPWYVAATVISIAHIDSL). Topologically, residues 812 to 833 (KMETETSAPGEQPKFLGVREQR) are cytoplasmic. A helical transmembrane segment spans residues 834–850 (VTGTVVFLLTGLSVFMA). Residues 851-857 (PILKFIP) are Extracellular-facing. Residues 858–874 (MPVLYGVFLYMGVASLN) form a helical membrane-spanning segment. The Cytoplasmic segment spans residues 875–916 (GVQFMDRLKLLLMPPKYQPDFIYLRHVPLRRVHLFTFLQVVC). Residues 917-942 (LAMLWILKSTVAAIIFPVMILALVAV) constitute an intramembrane region (discontinuously helical). Over 943–1035 (RKAMDYFFSQ…PTFLERHTSC (93 aa)) the chain is Cytoplasmic. Residues 968–1035 (KKKEDEKKKK…PTFLERHTSC (68 aa)) are disordered. A compositionally biased stretch (basic and acidic residues) spans 1007–1035 (IMEKEPFLIDSKPSDRENSPTFLERHTSC).

Belongs to the anion exchanger (TC 2.A.31) family. In terms of assembly, homodimer. Expressed in kidney and to a lower extent in bladder, brain, intestine, large intestine and eye.

The protein resides in the basolateral cell membrane. The protein localises to the cell membrane. The catalysed reaction is 2 hydrogencarbonate(out) + Na(+)(out) = 2 hydrogencarbonate(in) + Na(+)(in). The enzyme catalyses 3 hydrogencarbonate(out) + Na(+)(out) = 3 hydrogencarbonate(in) + Na(+)(in). Its function is as follows. Electrogenic sodium/bicarbonate cotransporter with a Na(+):HCO3(-) stoichiometry varying from 1:2 to 1:3. May regulate bicarbonate influx/efflux at the basolateral membrane of cells and regulate intracellular pH. This Ambystoma tigrinum (Eastern tiger salamander) protein is Electrogenic sodium bicarbonate cotransporter 1 (SLC4A4).